Reading from the N-terminus, the 766-residue chain is Single-minded homolog 1 (766 aa).

Residues 1–53 (MKEKSKNAARTRREKENSEFYELAKLLPLPSAITSQLDKASIIRLTTSYLKMR) form the bHLH domain. 2 consecutive PAS domains span residues 77–147 (GREL…QPYH) and 218–288 (PPSA…LVKG). A PAC domain is found at 292 to 335 (TKYYRFLAKHGGWVWVQSYATIVHNSRSSRPHCIVSVNYVLTDT). Positions 336–766 (EYKGLQLSLD…GTSVIITNGS (431 aa)) constitute a Single-minded C-terminal domain. Over residues 353–365 (AFSYTSSSTPTMT) the composition is skewed to polar residues. 2 disordered regions span residues 353–431 (AFSY…SQHD) and 528–563 (WDEDSVVSSPDPGSASESGDRYRTEQYQSSPHEPSK). Positions 368-387 (RKGAKSRLSSSKSKSRTSPY) match the Nuclear localization signal motif. Residues 373 to 385 (SRLSSSKSKSRTS) show a composition bias toward low complexity. A compositionally biased stretch (basic and acidic residues) spans 394 to 404 (HTERSESDHDS).

In terms of assembly, efficient DNA binding requires dimerization with another bHLH protein. Heterodimer; forms a heterodimer with ARNT, ARNT2.

Its subcellular location is the nucleus. Transcriptional factor that may have pleiotropic effects during embryogenesis and in the adult. The sequence is that of Single-minded homolog 1 (SIM1) from Homo sapiens (Human).